Here is a 222-residue protein sequence, read N- to C-terminus: Adenylate kinase (222 aa).

Residue 10–15 (GAGKGT) participates in ATP binding. An NMP region spans residues 30-59 (STGDMLRAAVKAGTPLGIEAKKVMDAGGLV). AMP contacts are provided by residues threonine 31, arginine 36, 57 to 59 (GLV), 85 to 88 (GFPR), and glutamine 92. The LID stretch occupies residues 122–159 (GRRVHVASGRTYHVKYNPPKNEGQDDETGDPLIQRDDD). Residues arginine 123 and 132-133 (TY) contribute to the ATP site. The tract at residues 135–162 (VKYNPPKNEGQDDETGDPLIQRDDDKEE) is disordered. The AMP site is built by arginine 156 and arginine 167. Glycine 207 contributes to the ATP binding site.

The protein belongs to the adenylate kinase family. Monomer.

It localises to the cytoplasm. The catalysed reaction is AMP + ATP = 2 ADP. The protein operates within purine metabolism; AMP biosynthesis via salvage pathway; AMP from ADP: step 1/1. Catalyzes the reversible transfer of the terminal phosphate group between ATP and AMP. Plays an important role in cellular energy homeostasis and in adenine nucleotide metabolism. The sequence is that of Adenylate kinase from Ralstonia nicotianae (strain ATCC BAA-1114 / GMI1000) (Ralstonia solanacearum).